Reading from the N-terminus, the 429-residue chain is 3-phosphoshikimate 1-carboxyvinyltransferase (429 aa).

3-phosphoshikimate-binding residues include lysine 23, serine 24, and arginine 28. Phosphoenolpyruvate is bound at residue lysine 23. Phosphoenolpyruvate contacts are provided by glycine 95 and arginine 123. Serine 168, glutamine 170, aspartate 316, and lysine 343 together coordinate 3-phosphoshikimate. Residue glutamine 170 coordinates phosphoenolpyruvate. Aspartate 316 serves as the catalytic Proton acceptor. Arginine 347 and arginine 389 together coordinate phosphoenolpyruvate.

This sequence belongs to the EPSP synthase family. As to quaternary structure, monomer.

The protein localises to the cytoplasm. It carries out the reaction 3-phosphoshikimate + phosphoenolpyruvate = 5-O-(1-carboxyvinyl)-3-phosphoshikimate + phosphate. Its pathway is metabolic intermediate biosynthesis; chorismate biosynthesis; chorismate from D-erythrose 4-phosphate and phosphoenolpyruvate: step 6/7. Its function is as follows. Catalyzes the transfer of the enolpyruvyl moiety of phosphoenolpyruvate (PEP) to the 5-hydroxyl of shikimate-3-phosphate (S3P) to produce enolpyruvyl shikimate-3-phosphate and inorganic phosphate. This chain is 3-phosphoshikimate 1-carboxyvinyltransferase, found in Bacillus cereus (strain ZK / E33L).